We begin with the raw amino-acid sequence, 435 residues long: 5-hydroxybenzimidazole synthase (435 aa).

Substrate-binding positions include Met95, Tyr124, His163, 186–188 (SKG), 227–230 (NGLR), and Glu266. His270 is a binding site for Zn(2+). Tyr293 contacts substrate. His334 is a Zn(2+) binding site. [4Fe-4S] cluster contacts are provided by Cys410, Cys413, and Cys417.

It belongs to the ThiC family. 5-hydroxybenzimidazole synthase subfamily. In terms of assembly, homodimer. It depends on [4Fe-4S] cluster as a cofactor.

It carries out the reaction 5-amino-1-(5-phospho-beta-D-ribosyl)imidazole + AH2 + S-adenosyl-L-methionine = 5-hydroxybenzimidazole + 5'-deoxyadenosine + formate + L-methionine + A + NH4(+) + phosphate + 2 H(+). Functionally, catalyzes the conversion of aminoimidazole ribotide (AIR) to 5-hydroxybenzimidazole (5-HBI) in a radical S-adenosyl-L-methionine (SAM)-dependent reaction. Is thus involved in the anaerobic biosynthesis of the benzimidazole lower axial ligand of the cobamide produced by G.metallireducens. This chain is 5-hydroxybenzimidazole synthase, found in Geobacter metallireducens (strain ATCC 53774 / DSM 7210 / GS-15).